The sequence spans 369 residues: Histidinol-phosphate aminotransferase 2 (369 aa).

K231 carries the N6-(pyridoxal phosphate)lysine modification.

The protein belongs to the class-II pyridoxal-phosphate-dependent aminotransferase family. Histidinol-phosphate aminotransferase subfamily. In terms of assembly, homodimer. It depends on pyridoxal 5'-phosphate as a cofactor.

The catalysed reaction is L-histidinol phosphate + 2-oxoglutarate = 3-(imidazol-4-yl)-2-oxopropyl phosphate + L-glutamate. It functions in the pathway amino-acid biosynthesis; L-histidine biosynthesis; L-histidine from 5-phospho-alpha-D-ribose 1-diphosphate: step 7/9. The chain is Histidinol-phosphate aminotransferase 2 from Legionella pneumophila subsp. pneumophila (strain Philadelphia 1 / ATCC 33152 / DSM 7513).